Here is a 304-residue protein sequence, read N- to C-terminus: Proline dehydrogenase 2 (304 aa).

Residue Lys-97 participates in substrate binding. The active site involves Asp-131. Positions 132 and 160 each coordinate FAD. Arg-181 is a catalytic residue. Residues 184–186 (KGA) and 223–224 (TH) contribute to the FAD site. A substrate-binding site is contributed by 285–286 (RR).

The protein belongs to the proline dehydrogenase family. It depends on FAD as a cofactor.

The catalysed reaction is L-proline + a quinone = (S)-1-pyrroline-5-carboxylate + a quinol + H(+). It participates in amino-acid degradation; L-proline degradation into L-glutamate; L-glutamate from L-proline: step 1/2. Functionally, converts proline to delta-1-pyrroline-5-carboxylate. The chain is Proline dehydrogenase 2 from Bacillus subtilis subsp. natto.